Here is a 417-residue protein sequence, read N- to C-terminus: Serine hydroxymethyltransferase 4 (417 aa).

(6S)-5,6,7,8-tetrahydrofolate contacts are provided by residues Leu121 and 125–127 (GHL). N6-(pyridoxal phosphate)lysine is present on Lys230. A (6S)-5,6,7,8-tetrahydrofolate-binding site is contributed by 355 to 357 (SPF).

This sequence belongs to the SHMT family. Homodimer. The cofactor is pyridoxal 5'-phosphate.

It is found in the cytoplasm. It carries out the reaction (6R)-5,10-methylene-5,6,7,8-tetrahydrofolate + glycine + H2O = (6S)-5,6,7,8-tetrahydrofolate + L-serine. The protein operates within one-carbon metabolism; tetrahydrofolate interconversion. Its pathway is amino-acid biosynthesis; glycine biosynthesis; glycine from L-serine: step 1/1. Functionally, catalyzes the reversible interconversion of serine and glycine with tetrahydrofolate (THF) serving as the one-carbon carrier. This reaction serves as the major source of one-carbon groups required for the biosynthesis of purines, thymidylate, methionine, and other important biomolecules. Also exhibits THF-independent aldolase activity toward beta-hydroxyamino acids, producing glycine and aldehydes, via a retro-aldol mechanism. This Colwellia psychrerythraea (strain 34H / ATCC BAA-681) (Vibrio psychroerythus) protein is Serine hydroxymethyltransferase 4.